An 89-amino-acid chain; its full sequence is Elongation factor 1-beta (89 aa).

Belongs to the EF-1-beta/EF-1-delta family.

Promotes the exchange of GDP for GTP in EF-1-alpha/GDP, thus allowing the regeneration of EF-1-alpha/GTP that could then be used to form the ternary complex EF-1-alpha/GTP/AAtRNA. This is Elongation factor 1-beta from Methanosarcina acetivorans (strain ATCC 35395 / DSM 2834 / JCM 12185 / C2A).